Consider the following 197-residue polypeptide: Segregation and condensation protein B (197 aa).

This sequence belongs to the ScpB family. In terms of assembly, homodimer. Homodimerization may be required to stabilize the binding of ScpA to the Smc head domains. Component of a cohesin-like complex composed of ScpA, ScpB and the Smc homodimer, in which ScpA and ScpB bind to the head domain of Smc. The presence of the three proteins is required for the association of the complex with DNA.

The protein resides in the cytoplasm. Its function is as follows. Participates in chromosomal partition during cell division. May act via the formation of a condensin-like complex containing Smc and ScpA that pull DNA away from mid-cell into both cell halves. The polypeptide is Segregation and condensation protein B (Halalkalibacterium halodurans (strain ATCC BAA-125 / DSM 18197 / FERM 7344 / JCM 9153 / C-125) (Bacillus halodurans)).